Consider the following 596-residue polypeptide: Elongation factor 4 (596 aa).

One can recognise a tr-type G domain in the interval Ser2–Glu184. GTP is bound by residues Asp14–Thr19 and Asn131–Asp134.

The protein belongs to the TRAFAC class translation factor GTPase superfamily. Classic translation factor GTPase family. LepA subfamily.

Its subcellular location is the cell inner membrane. The catalysed reaction is GTP + H2O = GDP + phosphate + H(+). In terms of biological role, required for accurate and efficient protein synthesis under certain stress conditions. May act as a fidelity factor of the translation reaction, by catalyzing a one-codon backward translocation of tRNAs on improperly translocated ribosomes. Back-translocation proceeds from a post-translocation (POST) complex to a pre-translocation (PRE) complex, thus giving elongation factor G a second chance to translocate the tRNAs correctly. Binds to ribosomes in a GTP-dependent manner. This is Elongation factor 4 from Pseudomonas putida (strain GB-1).